A 669-amino-acid polypeptide reads, in one-letter code: Zeaxanthin epoxidase, chloroplastic (669 aa).

Residues 1 to 49 constitute a chloroplast transit peptide; sequence MYSTVFYTSVHPSTSVLSRKQLPLLISKDFSAELYHSLPCRSLENGHIN. FAD is bound by residues 87 to 115 and 365 to 378; these read KVLVAGGGIGGLVFALAAKKRGFDVLVFE and TFSWGRGRVTLLGD. In terms of domain architecture, FHA spans 553 to 617; the sequence is IVLSRDEDVP…HGTWVTDNEG (65 aa).

Requires FAD as cofactor.

The protein resides in the plastid. It localises to the chloroplast. The catalysed reaction is all-trans-zeaxanthin + 4 reduced [2Fe-2S]-[ferredoxin] + 2 O2 + 4 H(+) = all-trans-violaxanthin + 4 oxidized [2Fe-2S]-[ferredoxin] + 2 H2O. It functions in the pathway plant hormone biosynthesis; abscisate biosynthesis. In terms of biological role, converts zeaxanthin into antheraxanthin and subsequently violaxanthin. Involved in the epoxidation of zeaxanthin. Plays an important role in resistance to stresses, seed development and dormancy. In Solanum lycopersicum (Tomato), this protein is Zeaxanthin epoxidase, chloroplastic.